The chain runs to 783 residues: Heat shock transcription factor (783 aa).

The segment at 1-59 is disordered; that stretch reads MTTNLYAIAGPSKPTTPTSTPSPRSEPPSPLKSLTSLPTNPLNSHGTSTPNTLTNQLSS. 2 stretches are compositionally biased toward low complexity: residues 11–23 and 31–42; these read PSKPTTPTSTPSP and LKSLTSLPTNPL. A compositionally biased stretch (polar residues) spans 43-59; the sequence is NSHGTSTPNTLTNQLSS. The DNA-binding element occupies 78–168; it reads MKVPAFLNKL…PIELWEFANP (91 aa). The tract at residues 181 to 262 is disordered; that stretch reads VTRKNNRPSN…PGSVPPSHTS (82 aa). Low complexity-rich tracts occupy residues 189-199 and 209-233; these read SNSGVGPSSSV and STRSASAAAASGSASGQIQQAISQG. Over residues 238-262 the composition is skewed to polar residues; sequence NHSTSGKYLITDGTTPGSVPPSHTS. The segment at 280–333 is involved in trimerization; that stretch reads GIAAIRQTQASIATDLRKLQASNEALWRQAYETQEKQRKHEETIDLIVSFLERL. Composition is skewed to basic and acidic residues over residues 350–372 and 399–415; these read RGVGVRRDRDGREGRDSRDSRFA and TGEHGEIESPTSDDRLV. 3 disordered regions span residues 350-554, 599-652, and 736-783; these read RGVG…LLSP, QALA…TLAL, and QGLA…KSES. A compositionally biased stretch (polar residues) spans 418 to 448; that stretch reads GSNSEYSIPSVKRTSSSSHPISLGQLGSSRF. Composition is skewed to low complexity over residues 452–467, 497–511, 522–550, and 616–632; these read PSEDPSPSASGPGSTS, LSPLSDTDPLLPSSS, PFPSSNSNQSNSFNPSNPSSAWASNPSQP, and NPNGNASTSASASAHGM. A compositionally biased stretch (acidic residues) spans 742 to 752; that stretch reads GEEEGEREVEG. Over residues 753–765 the composition is skewed to gly residues; that stretch reads DGGVSSSGAGAGA.

The protein belongs to the HSF family. In terms of assembly, homotrimer. Homotrimerization increases the affinity of HSF1 to DNA. Interacts with transcriptional coregulator SSA1 on chromatin.

The protein localises to the nucleus. Its function is as follows. DNA-binding transcription factor that specifically binds heat shock promoter elements (HSE) and activates transcription. Together with its coregulator SSA1, activates expression of laccase LAC1 during glucose starvation. This is Heat shock transcription factor from Cryptococcus neoformans var. neoformans serotype D (strain JEC21 / ATCC MYA-565) (Filobasidiella neoformans).